We begin with the raw amino-acid sequence, 246 residues long: Thaumatin-like protein 1a (246 aa).

The signal sequence occupies residues 1 to 24 (MMKSQVASLLGLTLAILFFSGAHA). 8 cysteine pairs are disulfide-bonded: Cys-33–Cys-245, Cys-81–Cys-91, Cys-96–Cys-103, Cys-151–Cys-234, Cys-156–Cys-217, Cys-164–Cys-180, Cys-184–Cys-193, and Cys-194–Cys-204.

This sequence belongs to the thaumatin family.

The protein localises to the secreted. This chain is Thaumatin-like protein 1a (TL1), found in Malus domestica (Apple).